The following is a 551-amino-acid chain: Cysteine desulfurase SufS (551 aa).

The N-terminal stretch at Met1–Ser22 is a signal peptide. Lys327 is modified (N6-(pyridoxal phosphate)lysine). Cys500 serves as the catalytic Cysteine persulfide intermediate.

It belongs to the class-V pyridoxal-phosphate-dependent aminotransferase family. Csd subfamily. As to quaternary structure, monomer. Interacts with SufE; interaction enhances cysteine desulfurase activity of SufS. The cofactor is pyridoxal 5'-phosphate.

The protein localises to the plastid. It is found in the apicoplast. The enzyme catalyses (sulfur carrier)-H + L-cysteine = (sulfur carrier)-SH + L-alanine. The protein operates within cofactor biosynthesis; iron-sulfur cluster biosynthesis. Its function is as follows. Catalyzes sulfur activation and mobilization in sulfur mobilization (SUF) pathway for iron-sulfur (Fe-S) cluster biogenesis. Active when in complex with a partner protein SufE. Required for apicoplast maintenance. Plays a role in the development of sporozoites in oocysts in mosquitoes. This chain is Cysteine desulfurase SufS, found in Plasmodium vivax.